A 631-amino-acid chain; its full sequence is Sphingomyelin phosphodiesterase (631 aa).

The segment at methionine 1–glycine 23 is disordered. Residues methionine 1–alanine 46 form the signal peptide. One can recognise a Saposin B-type domain in the interval glycine 87 to aspartate 171. Residue asparagine 88 is glycosylated (N-linked (GlcNAc...) asparagine). Disulfide bonds link cysteine 91/cysteine 167, cysteine 94/cysteine 159, and cysteine 122/cysteine 133. N-linked (GlcNAc...) asparagine glycosylation is present at asparagine 177. Positions 208 and 210 each coordinate Zn(2+). Cystine bridges form between cysteine 223/cysteine 228 and cysteine 229/cysteine 252. Aspartate 280 and asparagine 320 together coordinate Zn(2+). 2 N-linked (GlcNAc...) asparagine glycosylation sites follow: asparagine 337 and asparagine 397. A disulfide bridge links cysteine 387 with cysteine 433. Zn(2+)-binding residues include histidine 427, histidine 459, and histidine 461. Asparagine 505 is a glycosylation site (N-linked (GlcNAc...) asparagine). A Phosphoserine; by PKC/PRKCD modification is found at serine 510. Asparagine 522 carries N-linked (GlcNAc...) asparagine glycosylation. Disulfide bonds link cysteine 586–cysteine 590 and cysteine 596–cysteine 609.

Belongs to the acid sphingomyelinase family. As to quaternary structure, monomer. Interacts with SORT1; the interaction is required for SMPD1 targeting to lysosomes. Zn(2+) serves as cofactor. Proteolytically processed. Mature lysosomal form arises from C-terminal proteolytic processing of pro-sphingomyelin phosphodiesterase. Post-translationally, this form is generated following cleavage by CASP7 in the extracellular milieu. It shows increased activity. In terms of processing, both lysosomal and secreted forms are glycosylated but they show a differential pattern of glycosylation. Phosphorylated at Ser-510 by PRKCD upon stress stimuli. Phosphorylation is required for secretion.

The protein resides in the lysosome. It is found in the lipid droplet. It localises to the secreted. Its subcellular location is the extracellular space. It catalyses the reaction a sphingomyelin + H2O = phosphocholine + an N-acylsphing-4-enine + H(+). The enzyme catalyses N-(octadecanoyl)-sphing-4-enine-1-phosphocholine + H2O = N-octadecanoylsphing-4-enine + phosphocholine + H(+). The catalysed reaction is 1,2-dihexadecanoyl-sn-glycero-3-phosphocholine + H2O = 1,2-dihexadecanoyl-sn-glycerol + phosphocholine + H(+). It carries out the reaction a 1,2-diacyl-sn-glycero-3-phosphocholine + H2O = phosphocholine + a 1,2-diacyl-sn-glycerol + H(+). Its activity is regulated as follows. Hydrolysis of liposomal sphingomyelin is stimulated by incorporation of diacylglycerol (DAG), ceramide and free fatty acids into the liposomal membranes. Phosphatidylcholine hydrolysis is inhibited by incorporation of cholesterol, ceramide, DAG, monoacylglycerol and fatty acids. Antidepressants, namely amitriptyline, imipramine, desipramine, fluoxetine, sertraline, escitalopram, and maprotiline inhibit sphingomyelin phosphodiesterase activity. (Microbial infection) The secretory form is activated by P.aeruginosa, this activation results in the release of ceramide in the outer leaflet of the plasma membrane. With respect to regulation, (Microbial infection) The secretory form is activated by human coronavirus SARS-CoV-2, this activation results in the release of ceramide in the outer leaflet of the plasma membrane. Functionally, converts sphingomyelin to ceramide. Exists as two enzymatic forms that arise from alternative trafficking of a single protein precursor, one that is targeted to the endolysosomal compartment, whereas the other is released extracellularly. However, in response to various forms of stress, lysosomal exocytosis may represent a major source of the secretory form. Its function is as follows. In the lysosomes, converts sphingomyelin to ceramide. Plays an important role in the export of cholesterol from the intraendolysosomal membranes. Also has phospholipase C activities toward 1,2-diacylglycerolphosphocholine and 1,2-diacylglycerolphosphoglycerol. Modulates stress-induced apoptosis through the production of ceramide. When secreted, modulates cell signaling with its ability to reorganize the plasma membrane by converting sphingomyelin to ceramide. Secreted form is increased in response to stress and inflammatory mediators such as IL1B, IFNG or TNF as well as upon infection with bacteria and viruses. Produces the release of ceramide in the outer leaflet of the plasma membrane playing a central role in host defense. Ceramide reorganizes these rafts into larger signaling platforms that are required to internalize P.aeruginosa, induce apoptosis and regulate the cytokine response in infected cells. In wounded cells, the lysosomal form is released extracellularly in the presence of Ca(2+) and promotes endocytosis and plasma membrane repair. In terms of biological role, this form is generated following cleavage by CASP7 in the extracellular milieu in response to bacterial infection. It shows increased ability to convert sphingomyelin to ceramide and promotes plasma membrane repair. Plasma membrane repair by ceramide counteracts the action of gasdermin-D (GSDMD) perforin (PRF1) pores that are formed in response to bacterial infection. Functionally, (Microbial infection) Secretion is activated by bacteria such as P.aeruginosa, N.gonorrhoeae and others, this activation results in the release of ceramide in the outer leaflet of the plasma membrane which facilitates the infection. Its function is as follows. (Microbial infection) Secretion is activated by human coronaviruses SARS-CoV and SARS-CoV-2 as well as Zaire ebolavirus, this activation results in the release of ceramide in the outer leaflet of the plasma membrane which facilitates the infection. Lacks residues that bind the cofactor Zn(2+) and has no enzyme activity. The chain is Sphingomyelin phosphodiesterase from Homo sapiens (Human).